Reading from the N-terminus, the 201-residue chain is Lipopolysaccharide core heptose(II)-phosphate phosphatase (201 aa).

A signal peptide spans 1-35 (MLAFTLRFIKNKRYLATLAGALVIIAGLTSQHAWS).

The protein belongs to the phosphoglycerate mutase family. Ais subfamily.

The protein resides in the periplasm. The protein operates within bacterial outer membrane biogenesis; lipopolysaccharide metabolism. In terms of biological role, catalyzes the dephosphorylation of heptose(II) of the outer membrane lipopolysaccharide core. In Salmonella heidelberg (strain SL476), this protein is Lipopolysaccharide core heptose(II)-phosphate phosphatase.